The primary structure comprises 422 residues: Tryptophan synthase beta chain 2 (422 aa).

Lys-111 is modified (N6-(pyridoxal phosphate)lysine).

Belongs to the TrpB family. Tetramer of two alpha and two beta chains. Requires pyridoxal 5'-phosphate as cofactor.

It carries out the reaction (1S,2R)-1-C-(indol-3-yl)glycerol 3-phosphate + L-serine = D-glyceraldehyde 3-phosphate + L-tryptophan + H2O. It functions in the pathway amino-acid biosynthesis; L-tryptophan biosynthesis; L-tryptophan from chorismate: step 5/5. Its function is as follows. The beta subunit is responsible for the synthesis of L-tryptophan from indole and L-serine. The sequence is that of Tryptophan synthase beta chain 2 (trpB2) from Thermotoga maritima (strain ATCC 43589 / DSM 3109 / JCM 10099 / NBRC 100826 / MSB8).